A 337-amino-acid chain; its full sequence is Protein MICROTUBULE BINDING PROTEIN 2C (337 aa).

Residues 80-147 (RGSMTYTKMP…STSSLTEKDR (68 aa)) form a disordered region. Residues 89 to 103 (PSRESLYKKTSEVKG) are compositionally biased toward basic and acidic residues. Residues 120–142 (KNVSSSQDGYAENFSTPSSTSSL) show a composition bias toward polar residues. Coiled coils occupy residues 143–194 (TEKD…MKKD), 223–250 (VEKL…LQGE), and 294–314 (LQKM…AKEN).

The protein belongs to the microtubule binding protein 2C family. Interacts with KN-1. Binds to tobacco mosaic virus movement protein (TMV-MP) at microtubules. Constitutively expressed in leaves.

The protein resides in the cytoplasm. It localises to the cytoskeleton. Functionally, prevents homeodomain proteins (e.g. STM) association to plasmodesmata and, consequently, cell-to-cell transport. Binds to RNA. Alters KN1 RNA-binding capacity. Regulates cytoskeleton (e.g. actin) organization that determinates cell shape. Interferes with cell-to-cell transport of tobacco mosaic virus movement protein (TMV-MP) by mediating its accumulation at microtubules, thus interfering with cell-to-cell virus movement. This is Protein MICROTUBULE BINDING PROTEIN 2C from Nicotiana tabacum (Common tobacco).